The primary structure comprises 388 residues: Acetate kinase (388 aa).

A Mg(2+)-binding site is contributed by asparagine 8. ATP is bound at residue lysine 15. Position 88 (arginine 88) interacts with substrate. Residue aspartate 144 is the Proton donor/acceptor of the active site. Residues 202–206 (HLGNG), 276–278 (DMR), and 321–325 (GVGEN) each bind ATP. Glutamate 375 lines the Mg(2+) pocket.

It belongs to the acetokinase family. In terms of assembly, homodimer. The cofactor is Mg(2+). Requires Mn(2+) as cofactor.

It is found in the cytoplasm. It catalyses the reaction acetate + ATP = acetyl phosphate + ADP. It functions in the pathway metabolic intermediate biosynthesis; acetyl-CoA biosynthesis; acetyl-CoA from acetate: step 1/2. Functionally, catalyzes the formation of acetyl phosphate from acetate and ATP. Can also catalyze the reverse reaction. The chain is Acetate kinase from Mycoplasmoides gallisepticum (strain R(low / passage 15 / clone 2)) (Mycoplasma gallisepticum).